A 448-amino-acid chain; its full sequence is uncharacterized protein (448 aa).

Residue lysine 280 is modified to N6-(pyridoxal phosphate)lysine.

This sequence belongs to the class-III pyridoxal-phosphate-dependent aminotransferase family.

Its subcellular location is the cytoplasm. It localises to the mitochondrion. This is an uncharacterized protein from Schizosaccharomyces pombe (strain 972 / ATCC 24843) (Fission yeast).